The chain runs to 975 residues: Homeobox protein cut-like 1 (975 aa).

A DNA-binding region (CUT 1) is located at residues 1–73; that stretch reads SRQVKEQLIK…ILALRSIQGR (73 aa). Disordered stretches follow at residues 90 to 113 and 126 to 148; these read PKRR…GSDE and LQVQ…TSDD. A coiled-coil region spans residues 113–169; the sequence is EAIKSILEQAKRELQVQKTAEPAQPSSTSSSGTSDDAIRSILQQARREMEAQQAALD. At S207 the chain carries Phosphoserine. Residues 209-246 are disordered; the sequence is KKPPTAPDTSASTLPNPPALKKESQDAPGLDLPGAAES. Residues K229, K255, and K286 each participate in a glycyl lysine isopeptide (Lys-Gly) (interchain with G-Cter in SUMO2) cross-link. Residues 262–297 show a composition bias toward basic and acidic residues; the sequence is GVWKDHWWSTVQPERKSAAPPEDAKSEEAGGTKEKG. The disordered stretch occupies residues 262–369; the sequence is GVWKDHWWST…SKPAKPSVPP (108 aa). The span at 328-351 shows a compositional bias: polar residues; the sequence is RTPQSSELSLTGASRSETPQNSPL. S349 bears the Phosphoserine mark. Positions 374–461 form a DNA-binding region, CUT 2; that stretch reads QYEIYMYQEV…QGVLPVQGQQ (88 aa). A compositionally biased stretch (polar residues) spans 476 to 489; sequence LQQGCVSSESTPKT. The interval 476-549 is disordered; it reads LQQGCVSSES…SQPATPLPLS (74 aa). Residues 490-506 are compositionally biased toward low complexity; sequence SASCSPAPESPMSSSES. S499 and S509 each carry phosphoserine. A DNA-binding region (CUT 3) is located at residues 557–644; it reads QELVAMSPEL…VEKLMDMKRM (88 aa). The segment at 652–687 is disordered; sequence RRHSSVSDSQPCEPPSVGIDYSQGASPQPQHQLKKP. A DNA-binding region (homeobox) is located at residues 684 to 743; it reads LKKPRVVLAPEEKEALKRAYQQKPYPSPKTIEELATQLNLKTSTVINWFHNYRSRIRREL. S710 bears the Phosphoserine mark. K724 is covalently cross-linked (Glycyl lysine isopeptide (Lys-Gly) (interchain with G-Cter in SUMO2)). The segment at 752–949 is disordered; it reads SQGQAGARHS…DSRDNPLRKK (198 aa). Residues 756 to 773 show a composition bias toward low complexity; sequence AGARHSPSARSSGAAPSS. The residue at position 777 (S777) is a Phosphoserine. The span at 780–813 shows a compositional bias: low complexity; that stretch reads GVEAAEGPGAADAEESAPAAAAKSQGGPAEAAVA. Gly residues predominate over residues 838–847; the sequence is PGRRGGGGPA. The segment covering 850 to 860 has biased composition (low complexity); it reads APAAPAAAARG. A compositionally biased stretch (basic residues) spans 861–890; the sequence is PSRRPGARAKPRRRRRRRRRHARGGGRRYL. Low complexity predominate over residues 907 to 929; it reads RSSALPSTSAPAAARRPSSLQSL. S925 bears the Phosphoserine mark. Basic and acidic residues predominate over residues 937-946; the sequence is GARDSRDNPL. Phosphoserine occurs at positions 956 and 966.

This sequence belongs to the CUT homeobox family. Interacts with BANP. In terms of processing, as cells progress into S phase, a fraction of CUX1 molecules is proteolytically processed into N-terminally truncated proteins of 110 kDa by CTSL. Cell cycle-dependent processing of CUX1 serves to generate a CDP/Cux p110 with distinct DNA binding and transcriptional properties. Phosphorylated by PKA. In terms of tissue distribution, a broad pattern of expression observed in tissues of diverse origins, such as cartilage, liver, brain, lung, heart and skeletal muscle. There are 2 distinct protein species: the larger one (230-250 kDa) is found mainly in adult brain, lung and heart, and the smaller one (180-190 kDa) predominates in early embryonic tissues.

The protein resides in the nucleus. Transcription factor involved in the control of neuronal differentiation in the brain. Regulates dendrite development and branching, and dendritic spine formation in cortical layers II-III. Also involved in the control of synaptogenesis. In addition, it has probably a broad role in mammalian development as a repressor of developmentally regulated gene expression. May act by preventing binding of positively-activing CCAAT factors to promoters. Component of nf-munr repressor; binds to the matrix attachment regions (MARs) (5' and 3') of the immunoglobulin heavy chain enhancer. Represses T-cell receptor (TCR) beta enhancer function by binding to MARbeta, an ATC-rich DNA sequence located upstream of the TCR beta enhancer. Binds to the TH enhancer; may require the basic helix-loop-helix protein TCF4 as a coactivator. Functionally, plays a role in cell cycle progression, in particular at the G1/S transition. As cells progress into S phase, a fraction of CUX1 molecules is proteolytically processed into N-terminally truncated proteins of 110 kDa. While CUX1 only transiently binds to DNA and carries the CCAAT-displacement activity, CDP/Cux p110 makes a stable interaction with DNA and stimulates expression of genes such as POLA1. This chain is Homeobox protein cut-like 1 (CUX1), found in Canis lupus familiaris (Dog).